Reading from the N-terminus, the 487-residue chain is Berbamunine synthase (487 aa).

Heme is bound at residue C429.

The protein belongs to the cytochrome P450 family. Heme serves as cofactor.

Its subcellular location is the endoplasmic reticulum membrane. It is found in the microsome membrane. The catalysed reaction is (R)-N-methylcoclaurine + (S)-N-methylcoclaurine + reduced [NADPH--hemoprotein reductase] + O2 = berbamunine + oxidized [NADPH--hemoprotein reductase] + 2 H2O + H(+). Its pathway is alkaloid biosynthesis; berbamunine biosynthesis; berbamunine from (R)-N-methylcoclaurine and (S)-N-methylcoclaurine: step 1/1. Its function is as follows. Forms the bisbenzylisoquinoline alkaloid berbamunine by phenol oxidation of N-methylcoclaurine without the incorporation of oxygen into the product. Oxidatively couples either two molecules of (R)-N-methylcoclaurine to form the (R,R) dimer guattegaumerine or one molecule each of (R)- and (S)-N-methylcoclaurine to form the (R,S) dimer berbamunine. The sequence is that of Berbamunine synthase (CYP80A1) from Berberis stolonifera (Barberry).